A 428-amino-acid chain; its full sequence is Adenylosuccinate synthetase (428 aa).

GTP contacts are provided by residues 12-18 (GDEGKGK) and 40-42 (GHT). Residue aspartate 13 is the Proton acceptor of the active site. Mg(2+) is bound by residues aspartate 13 and glycine 40. Residues 13–16 (DEGK), 38–41 (NAGH), threonine 133, arginine 147, asparagine 224, threonine 239, and arginine 303 each bind IMP. The active-site Proton donor is the histidine 41. 299–305 (TTTGRRR) contributes to the substrate binding site. GTP is bound by residues arginine 305, 331–333 (KLD), and 413–415 (GVG).

The protein belongs to the adenylosuccinate synthetase family. As to quaternary structure, homodimer. It depends on Mg(2+) as a cofactor.

The protein resides in the cytoplasm. The enzyme catalyses IMP + L-aspartate + GTP = N(6)-(1,2-dicarboxyethyl)-AMP + GDP + phosphate + 2 H(+). It participates in purine metabolism; AMP biosynthesis via de novo pathway; AMP from IMP: step 1/2. Its function is as follows. Plays an important role in the de novo pathway and in the salvage pathway of purine nucleotide biosynthesis. Catalyzes the first committed step in the biosynthesis of AMP from IMP. The chain is Adenylosuccinate synthetase from Coprinopsis cinerea (strain Okayama-7 / 130 / ATCC MYA-4618 / FGSC 9003) (Inky cap fungus).